Here is a 154-residue protein sequence, read N- to C-terminus: Ribosome maturation factor RimP (154 aa).

This sequence belongs to the RimP family.

Its subcellular location is the cytoplasm. Functionally, required for maturation of 30S ribosomal subunits. The polypeptide is Ribosome maturation factor RimP (Natranaerobius thermophilus (strain ATCC BAA-1301 / DSM 18059 / JW/NM-WN-LF)).